The chain runs to 425 residues: Glutamate-1-semialdehyde 2,1-aminomutase (425 aa).

Lys264 is modified (N6-(pyridoxal phosphate)lysine).

Belongs to the class-III pyridoxal-phosphate-dependent aminotransferase family. HemL subfamily. Homodimer. Pyridoxal 5'-phosphate serves as cofactor.

It localises to the cytoplasm. It catalyses the reaction (S)-4-amino-5-oxopentanoate = 5-aminolevulinate. The protein operates within porphyrin-containing compound metabolism; protoporphyrin-IX biosynthesis; 5-aminolevulinate from L-glutamyl-tRNA(Glu): step 2/2. The protein is Glutamate-1-semialdehyde 2,1-aminomutase of Leptospira biflexa serovar Patoc (strain Patoc 1 / Ames).